The primary structure comprises 280 residues: Eukaryotic translation initiation factor 3 subunit F-1 (280 aa).

The 131-residue stretch at 8–138 (VRVHPVVLFQ…LRAYVCIQLG (131 aa)) folds into the MPN domain.

It belongs to the eIF-3 subunit F family. In terms of assembly, component of the eukaryotic translation initiation factor 3 (eIF-3) complex. The eIF-3 complex interacts with pix.

Its subcellular location is the cytoplasm. Component of the eukaryotic translation initiation factor 3 (eIF-3) complex, which is involved in protein synthesis of a specialized repertoire of mRNAs and, together with other initiation factors, stimulates binding of mRNA and methionyl-tRNAi to the 40S ribosome. The eIF-3 complex specifically targets and initiates translation of a subset of mRNAs involved in cell proliferation. The polypeptide is Eukaryotic translation initiation factor 3 subunit F-1 (Drosophila erecta (Fruit fly)).